Reading from the N-terminus, the 1140-residue chain is DNA damage-binding protein 1 (1140 aa).

Ser-2 is subject to N-acetylserine. An interaction with CDT1 region spans residues 2–768 (SYNYVVTAQK…QALSSSVSSS (767 aa)). Residues 13–356 (TAVNGCVTGH…VVAMETFTNL (344 aa)) are WD repeat beta-propeller A. The segment at 391 to 708 (RNGIGIHEHA…LTIGTIDEIQ (318 aa)) is WD repeat beta-propeller B; Interaction with CUL4A. The segment at 709–1043 (KLHIRTVPLY…NGMIGLVTSL (335 aa)) is WD repeat beta-propeller C. Positions 771-1140 (FSSSTAPHET…KVVEELTRIH (370 aa)) are interaction with CDT1 and CUL4A. At Lys-1067 the chain carries N6-acetyllysine. Lys-1121 is covalently cross-linked (Glycyl lysine isopeptide (Lys-Gly) (interchain with G-Cter in SUMO2)). Thr-1125 carries the phosphothreonine modification.

This sequence belongs to the DDB1 family. As to quaternary structure, component of the UV-DDB complex which includes DDB1 and DDB2; the heterodimer dimerizes to give rise to a heterotetramer when bound to damaged DNA. The UV-DDB complex interacts with monoubiquitinated histone H2A and binds to XPC via the DDB2 subunit. Component of numerous DCX (DDB1-CUL4-X-box) E3 ubiquitin-protein ligase complexes which consist of a core of DDB1, CUL4A or CUL4B and RBX1. DDB1 may recruit specific substrate targeting subunits to the DCX complex. These substrate targeting subunits are generally known as DCAF (DDB1- and CUL4-associated factor) or CDW (CUL4-DDB1-associated WD40-repeat) proteins. Interacts with AMBRA1, ATG16L1, BTRC, CRBN, DCAF1, DCAF4, DCAF5, DCAF6, DCAF7, DCAF8, DCAF9, DCAF10, DCAF11, DCAF12, DCAF15, DCAF16, DCAF17, DDA1, DET1, DTL, ERCC8, FBXW5, FBXW8, GRWD1, KATNB1, NLE1, NUP43, PAFAH1B1, PHIP, PWP1, RBBP4, RBBP5, RBBP7, COP1, SNRNP40, DCAF1, WDR5, WDR5B, WDR12, WDR26, WDR39, WDR42, WDR53, WDR59, WDR61, WSB1, WSB2, LRWD1 and WDTC1. DCX complexes may associate with the COP9 signalosome, and this inhibits the E3 ubiquitin-protein ligase activity of the complex. Interacts with NF2, TSC1 and TSC2. Interacts with AGO1 and AGO2. Associates with the E3 ligase complex containing DYRK2, EDD/UBR5, DDB1 and DCAF1 proteins (EDVP complex). Interacts directly with DYRK2. DCX(DTL) complex interacts with FBXO11; does not ubiquitinate and degradate FBXO11. Interacts with TRPC4AP. Interacts with CRY1 and CRY2. The DDB1-CUL4A complex interacts with CRY1. May also interact with DCUN1D1, DCUN1D2, DCUN1D3 and DCUN1D5. Component of the DCX(DCAF13) E3 ubiquitin ligase complex, at least composed of CUL4 (CUL4A or CUL4B), DDB1, DCAF13 and RBX1. Interacts with DCAF13 (via WD40 domain). In terms of processing, phosphorylated by ABL1. Ubiquitinated by CUL4A. Subsequently degraded by ubiquitin-dependent proteolysis. Post-translationally, acetylated, promoting interaction with CUL4 (CUL4A or CUL4B) and subsequent formation of DCX (DDB1-CUL4-X-box) E3 ubiquitin-protein ligase complexes. Deacetylation by SIRT7 impairs the interaction with CUL4 (CUL4A or CUL4B) and formation of DCX (DDB1-CUL4-X-box) E3 ubiquitin-protein ligase complexes.

It is found in the cytoplasm. Its subcellular location is the nucleus. The protein operates within protein modification; protein ubiquitination. Functionally, protein, which is both involved in DNA repair and protein ubiquitination, as part of the UV-DDB complex and DCX (DDB1-CUL4-X-box) complexes, respectively. Core component of the UV-DDB complex (UV-damaged DNA-binding protein complex), a complex that recognizes UV-induced DNA damage and recruit proteins of the nucleotide excision repair pathway (the NER pathway) to initiate DNA repair. The UV-DDB complex preferentially binds to cyclobutane pyrimidine dimers (CPD), 6-4 photoproducts (6-4 PP), apurinic sites and short mismatches. Also functions as a component of numerous distinct DCX (DDB1-CUL4-X-box) E3 ubiquitin-protein ligase complexes which mediate the ubiquitination and subsequent proteasomal degradation of target proteins. The functional specificity of the DCX E3 ubiquitin-protein ligase complex is determined by the variable substrate recognition component recruited by DDB1. DCX(DDB2) (also known as DDB1-CUL4-ROC1, CUL4-DDB-ROC1 and CUL4-DDB-RBX1) may ubiquitinate histone H2A, histone H3 and histone H4 at sites of UV-induced DNA damage. The ubiquitination of histones may facilitate their removal from the nucleosome and promote subsequent DNA repair. DCX(DDB2) also ubiquitinates XPC, which may enhance DNA-binding by XPC and promote NER. DCX(DTL) plays a role in PCNA-dependent polyubiquitination of CDT1 and MDM2-dependent ubiquitination of TP53 in response to radiation-induced DNA damage and during DNA replication. DCX(ERCC8) (the CSA complex) plays a role in transcription-coupled repair (TCR). The DDB1-CUL4A-DTL E3 ligase complex regulates the circadian clock function by mediating the ubiquitination and degradation of CRY1. DDB1-mediated CRY1 degradation promotes FOXO1 protein stability and FOXO1-mediated gluconeogenesis in the liver. By acting on TET dioxygenses, essential for oocyte maintenance at the primordial follicle stage, hence essential for female fertility. Maternal factor required for proper zygotic genome activation and genome reprogramming. In Pongo abelii (Sumatran orangutan), this protein is DNA damage-binding protein 1 (DDB1).